A 184-amino-acid chain; its full sequence is Casparian strip membrane protein 3 (184 aa).

Over 1 to 24 the chain is Cytoplasmic; sequence MEGSEEHGETSKAPLSRGVSKGVS. The chain crosses the membrane as a helical span at residues 25–45; sequence ILDVILRFVAIIGTLASAIAM. At 46 to 72 the chain is on the extracellular side; it reads GTTNQTLPFFTQFIRFKAQYSDLPTLT. Asparagine 49 is a glycosylation site (N-linked (GlcNAc...) asparagine). A helical membrane pass occupies residues 73 to 93; that stretch reads FFVVANSIVSAYLILSLPLSI. Over 94 to 105 the chain is Cytoplasmic; it reads VHVIRSRAKYSR. The helical transmembrane segment at 106-126 threads the bilayer; sequence LILIFFDAAMLALVTAGASAA. Over 127–159 the chain is Extracellular; that stretch reads AAIVYLAHKGNARANWLAICQQFDSFCERISGS. A helical membrane pass occupies residues 160-180; it reads LIGSFAAMVVLVLLIFLSAIA. The Cytoplasmic portion of the chain corresponds to 181–184; it reads LARR.

The protein belongs to the Casparian strip membrane proteins (CASP) family. As to quaternary structure, homodimer and heterodimers.

Its subcellular location is the cell membrane. Regulates membrane-cell wall junctions and localized cell wall deposition. Required for establishment of the Casparian strip membrane domain (CSD) and the subsequent formation of Casparian strips, a cell wall modification of the root endodermis that determines an apoplastic barrier between the intraorganismal apoplasm and the extraorganismal apoplasm and prevents lateral diffusion. The protein is Casparian strip membrane protein 3 of Oryza sativa subsp. indica (Rice).